The primary structure comprises 81 residues: Photosystem I iron-sulfur center (81 aa).

2 consecutive 4Fe-4S ferredoxin-type domains span residues 2 to 31 and 39 to 68; these read SHSVKIYDTCIGCTQCVRACPLDVLEMVPW and IAASPRTEDCVGCKRCETACPTDFLSIRVY. [4Fe-4S] cluster contacts are provided by Cys-11, Cys-14, Cys-17, Cys-21, Cys-48, Cys-51, Cys-54, and Cys-58.

The cyanobacterial PSI reaction center is composed of one copy each of PsaA,B,C,D,E,F,I,J,K,L,M and X, and forms trimeric complexes. [4Fe-4S] cluster is required as a cofactor.

The protein resides in the cellular thylakoid membrane. It catalyses the reaction reduced [plastocyanin] + hnu + oxidized [2Fe-2S]-[ferredoxin] = oxidized [plastocyanin] + reduced [2Fe-2S]-[ferredoxin]. Functionally, apoprotein for the two 4Fe-4S centers FA and FB of photosystem I (PSI); essential for photochemical activity. FB is the terminal electron acceptor of PSI, donating electrons to ferredoxin. The C-terminus interacts with PsaA/B/D and helps assemble the protein into the PSI complex. Required for binding of PsaD and PsaE to PSI. PSI is a plastocyanin/cytochrome c6-ferredoxin oxidoreductase, converting photonic excitation into a charge separation, which transfers an electron from the donor P700 chlorophyll pair to the spectroscopically characterized acceptors A0, A1, FX, FA and FB in turn. This chain is Photosystem I iron-sulfur center, found in Synechococcus elongatus (strain ATCC 33912 / PCC 7942 / FACHB-805) (Anacystis nidulans R2).